The following is a 74-amino-acid chain: Defensin-like protein P322 (74 aa).

An N-terminal signal peptide occupies residues 1 to 19 (MRFFATFFLLAMLVVATKM). Cystine bridges form between Cys-30–Cys-74, Cys-41–Cys-61, Cys-47–Cys-68, and Cys-51–Cys-70.

The protein belongs to the DEFL family. Protease inhibitor I18 (RTI/MTI-2) subfamily. As to expression, tuber.

The protein localises to the secreted. In Solanum tuberosum (Potato), this protein is Defensin-like protein P322.